We begin with the raw amino-acid sequence, 801 residues long: Phenylalanine--tRNA ligase beta subunit (801 aa).

The region spanning 39–154 (LKMPQKVVVG…GHLELGVELG (116 aa)) is the tRNA-binding domain. The 78-residue stretch at 398-475 (IDEITIKTTF…RIYGIDNVSS (78 aa)) folds into the B5 domain. Residues D453, D459, E462, and E463 each contribute to the Mg(2+) site. Residues 708–800 (SKYQKSTRDL…LVREFDAVLR (93 aa)) form the FDX-ACB domain.

The protein belongs to the phenylalanyl-tRNA synthetase beta subunit family. Type 1 subfamily. As to quaternary structure, tetramer of two alpha and two beta subunits. It depends on Mg(2+) as a cofactor.

Its subcellular location is the cytoplasm. The enzyme catalyses tRNA(Phe) + L-phenylalanine + ATP = L-phenylalanyl-tRNA(Phe) + AMP + diphosphate + H(+). The polypeptide is Phenylalanine--tRNA ligase beta subunit (Helicobacter hepaticus (strain ATCC 51449 / 3B1)).